A 308-amino-acid polypeptide reads, in one-letter code: Glucan 1,3-beta-glucosidase (308 aa).

The first 18 residues, 1–18 (MQIKFLTTLATVLTSVAA), serve as a signal peptide directing secretion. Catalysis depends on E119, which acts as the Proton donor. The N-linked (GlcNAc...) asparagine glycan is linked to N197. E228 (nucleophile) is an active-site residue.

Belongs to the glycosyl hydrolase 17 family.

The protein resides in the secreted. It localises to the cell wall. The enzyme catalyses Successive hydrolysis of beta-D-glucose units from the non-reducing ends of (1-&gt;3)-beta-D-glucans, releasing alpha-glucose.. The protein is Glucan 1,3-beta-glucosidase (BGL2) of Candida albicans (Yeast).